The following is an 814-amino-acid chain: Valine--tRNA ligase (814 aa).

Positions 46–56 (PTVSGQLHIGH) match the 'HIGH' region motif. Positions 536-540 (KMSKS) match the 'KMSKS' region motif. Lysine 539 contributes to the ATP binding site.

This sequence belongs to the class-I aminoacyl-tRNA synthetase family. ValS type 2 subfamily. Monomer.

Its subcellular location is the cytoplasm. It carries out the reaction tRNA(Val) + L-valine + ATP = L-valyl-tRNA(Val) + AMP + diphosphate. Its function is as follows. Catalyzes the attachment of valine to tRNA(Val). As ValRS can inadvertently accommodate and process structurally similar amino acids such as threonine, to avoid such errors, it has a 'posttransfer' editing activity that hydrolyzes mischarged Thr-tRNA(Val) in a tRNA-dependent manner. This Rickettsia typhi (strain ATCC VR-144 / Wilmington) protein is Valine--tRNA ligase.